Here is a 347-residue protein sequence, read N- to C-terminus: UDP-3-O-acylglucosamine N-acyltransferase (347 aa).

The active-site Proton acceptor is histidine 241.

This sequence belongs to the transferase hexapeptide repeat family. LpxD subfamily. Homotrimer.

It carries out the reaction a UDP-3-O-[(3R)-3-hydroxyacyl]-alpha-D-glucosamine + a (3R)-hydroxyacyl-[ACP] = a UDP-2-N,3-O-bis[(3R)-3-hydroxyacyl]-alpha-D-glucosamine + holo-[ACP] + H(+). Its pathway is bacterial outer membrane biogenesis; LPS lipid A biosynthesis. Catalyzes the N-acylation of UDP-3-O-acylglucosamine using 3-hydroxyacyl-ACP as the acyl donor. Is involved in the biosynthesis of lipid A, a phosphorylated glycolipid that anchors the lipopolysaccharide to the outer membrane of the cell. The sequence is that of UDP-3-O-acylglucosamine N-acyltransferase from Neisseria gonorrhoeae (strain ATCC 700825 / FA 1090).